A 356-amino-acid chain; its full sequence is Chaperone protein DnaJ (356 aa).

The J domain occupies 5–69; it reads DYYQILGVSK…ERRKEYDRIL (65 aa). Residues 121 to 197 form a CR-type zinc finger; the sequence is GCEKDIEYER…CSGRGRVAMH (77 aa). Cys-134, Cys-137, Cys-151, Cys-154, Cys-171, Cys-174, Cys-185, and Cys-188 together coordinate Zn(2+). 4 CXXCXGXG motif repeats span residues 134 to 141, 151 to 158, 171 to 178, and 185 to 192; these read CPTCEGKG, CHACEGTG, CSVCKGRG, and CPACSGRG.

It belongs to the DnaJ family. Homodimer. The cofactor is Zn(2+).

The protein localises to the cytoplasm. Participates actively in the response to hyperosmotic and heat shock by preventing the aggregation of stress-denatured proteins and by disaggregating proteins, also in an autonomous, DnaK-independent fashion. Unfolded proteins bind initially to DnaJ; upon interaction with the DnaJ-bound protein, DnaK hydrolyzes its bound ATP, resulting in the formation of a stable complex. GrpE releases ADP from DnaK; ATP binding to DnaK triggers the release of the substrate protein, thus completing the reaction cycle. Several rounds of ATP-dependent interactions between DnaJ, DnaK and GrpE are required for fully efficient folding. Also involved, together with DnaK and GrpE, in the DNA replication of plasmids through activation of initiation proteins. The polypeptide is Chaperone protein DnaJ (Hydrogenobacter thermophilus (strain DSM 6534 / IAM 12695 / TK-6)).